A 250-amino-acid polypeptide reads, in one-letter code: Octanoyltransferase (250 aa).

The BPL/LPL catalytic domain maps to aspartate 49 to leucine 230. Substrate contacts are provided by residues arginine 87–histidine 94, alanine 160–glycine 162, and glycine 173–alanine 175. Cysteine 191 functions as the Acyl-thioester intermediate in the catalytic mechanism.

Belongs to the LipB family.

Its subcellular location is the cytoplasm. The enzyme catalyses octanoyl-[ACP] + L-lysyl-[protein] = N(6)-octanoyl-L-lysyl-[protein] + holo-[ACP] + H(+). It functions in the pathway protein modification; protein lipoylation via endogenous pathway; protein N(6)-(lipoyl)lysine from octanoyl-[acyl-carrier-protein]: step 1/2. Functionally, catalyzes the transfer of endogenously produced octanoic acid from octanoyl-acyl-carrier-protein onto the lipoyl domains of lipoate-dependent enzymes. Lipoyl-ACP can also act as a substrate although octanoyl-ACP is likely to be the physiological substrate. The sequence is that of Octanoyltransferase from Corynebacterium diphtheriae (strain ATCC 700971 / NCTC 13129 / Biotype gravis).